We begin with the raw amino-acid sequence, 438 residues long: Putative phospholipase A2 (438 aa).

Residue serine 257 is the Nucleophile of the active site. Active-site charge relay system residues include aspartate 291 and histidine 368.

It belongs to the serine esterase family.

It is found in the cytoplasm. Its subcellular location is the nucleus. The catalysed reaction is a 1-O-alkyl-2-acetyl-sn-glycero-3-phosphocholine + H2O = a 1-O-alkyl-sn-glycero-3-phosphocholine + acetate + H(+). This is Putative phospholipase A2 from Schizosaccharomyces pombe (strain 972 / ATCC 24843) (Fission yeast).